The primary structure comprises 318 residues: MSSRKIIHIDMDAFYASVELREQPHLKGRPVVVAWEGARSVICAASYEARQFGLHSAMSVATAKRLCPQAVYVPPHFDLYRQVSAQIHAVFRRYTDLIEPLSLDEAYLDVTRNFKNIPYAGDVAKEIRAAIFAETGLTASAGIAPNKFLAKIASDWRKPNGQFVLPPHKVMAFLETLPLGKIPGVGKVTLKKMQSLGMRTAGDLRRFERGELLNHFGRYGYRLYDLVRGTDERPVKAERERLQISTEITLPEDLPLEQAAGHLPHLAEDLWRQITRKNVEAQSVTLKLKTYDFRIITRTLTYSSVLPDCALCCRLRKC.

The UmuC domain maps to 6–186; the sequence is IIHIDMDAFY…LPLGKIPGVG (181 aa). Mg(2+)-binding residues include D10 and D104. E105 is an active-site residue.

It belongs to the DNA polymerase type-Y family. Monomer. Requires Mg(2+) as cofactor.

The protein resides in the cytoplasm. The enzyme catalyses DNA(n) + a 2'-deoxyribonucleoside 5'-triphosphate = DNA(n+1) + diphosphate. Poorly processive, error-prone DNA polymerase involved in untargeted mutagenesis. Copies undamaged DNA at stalled replication forks, which arise in vivo from mismatched or misaligned primer ends. These misaligned primers can be extended by PolIV. Exhibits no 3'-5' exonuclease (proofreading) activity. May be involved in translesional synthesis, in conjunction with the beta clamp from PolIII. The protein is DNA polymerase IV of Neisseria meningitidis serogroup B (strain ATCC BAA-335 / MC58).